We begin with the raw amino-acid sequence, 1213 residues long: A disintegrin and metalloproteinase with thrombospondin motifs 2 (1213 aa).

The signal sequence occupies residues 1–28 (MDPPAGAARRLLCPALLLLLLPPPPLLL). The propeptide occupies 29-260 (LPPPPASVRL…INSSRRRVRR (232 aa)). The N-linked (GlcNAc...) asparagine glycan is linked to Asn111. The interval 211–232 (YRRPPTPKPPPVSEPQALDTGV) is disordered. The segment covering 214–223 (PPTPKPPPVS) has biased composition (pro residues). Asn252 is a glycosylation site (N-linked (GlcNAc...) asparagine). Residues 267 to 471 (YNIEVLLGVD…HSYDCLRDDP (205 aa)) form the Peptidase M12B domain. Disulfide bonds link Cys344–Cys393, Cys387–Cys466, Cys426–Cys452, Cys493–Cys518, Cys504–Cys527, Cys513–Cys546, Cys540–Cys551, Cys574–Cys611, Cys578–Cys616, and Cys589–Cys601. His409 is a binding site for Zn(2+). Residue Glu410 is part of the active site. Zn(2+) contacts are provided by His413 and His419. The 81-residue stretch at 480 to 560 (PQLPGLHYSM…CIWLTPDILK (81 aa)) folds into the Disintegrin domain. In terms of domain architecture, TSP type-1 1 spans 561–617 (RDGNWGAWTPFGSCSRTCGTGVKFRTRQCDNPHPANGGRTCSGLAYDFQLCNPQDCP). The Cell attachment site motif lies at 692–694 (RGD). Residues 723–851 (CKVVKGTFTR…LNVDDNNVLE (129 aa)) are spacer. TSP type-1 domains are found at residues 855–913 (VRHE…NPQE), 915–975 (SQPV…NREL), and 976–1030 (CPGR…APCP). 3 N-linked (GlcNAc...) asparagine glycosylation sites follow: Asn949, Asn950, and Asn994. 3 disulfides stabilise this stretch: Cys988–Cys1024, Cys992–Cys1029, and Cys1003–Cys1013. N-linked (GlcNAc...) asparagine glycosylation occurs at Asn1032. The 39-residue stretch at 1060-1098 (SKDQCQGDKSMFCRMEVLSRYCSIPSYNKLCCKSCNPPR) folds into the PLAC domain. N-linked (GlcNAc...) asparagine glycans are attached at residues Asn1099, Asn1147, and Asn1152.

As to quaternary structure, may belong to a multimeric complex. Binds specifically to collagen type XIV. Zn(2+) serves as cofactor. The precursor is cleaved by a furin endopeptidase. In terms of processing, glycosylated. Can be O-fucosylated by POFUT2 on a serine or a threonine residue found within the consensus sequence C1-X(2)-(S/T)-C2-G of the TSP type-1 repeat domains where C1 and C2 are the first and second cysteine residue of the repeat, respectively. Fucosylated repeats can then be further glycosylated by the addition of a beta-1,3-glucose residue by the glucosyltransferase, B3GALTL. Fucosylation mediates the efficient secretion of ADAMTS family members. Can also be C-glycosylated with one or two mannose molecules on tryptophan residues within the consensus sequence W-X-X-W of the TPRs, and N-glycosylated. These other glycosylations can also facilitate secretion.

The protein localises to the secreted. The protein resides in the extracellular space. It localises to the extracellular matrix. It catalyses the reaction Cleaves the N-propeptide of collagen chain alpha1(I) at Pro-|-Gln and of alpha1(II) and alpha2(I) at Ala-|-Gln.. In terms of biological role, cleaves the propeptides of type I and II collagen prior to fibril assembly. Does not act on type III collagen. Cleaves lysyl oxidase LOX at a site downstream of its propeptide cleavage site to produce a short LOX form with reduced collagen-binding activity. This chain is A disintegrin and metalloproteinase with thrombospondin motifs 2 (Adamts2), found in Mus musculus (Mouse).